The chain runs to 141 residues: Lutropin subunit beta (141 aa).

Residues 1-20 (MEMLQGLLLLMLLSMGGTWA) form the signal peptide. Disulfide bonds link C29–C77, C43–C92, C46–C130, C54–C108, C58–C110, and C113–C120. N-linked (GlcNAc...) asparagine glycans are attached at residues N33 and N50.

It belongs to the glycoprotein hormones subunit beta family. In terms of assembly, heterodimer of a common alpha chain and a unique beta chain which confers biological specificity to thyrotropin, lutropin, follitropin and gonadotropin.

It is found in the secreted. Its function is as follows. Promotes spermatogenesis and ovulation by stimulating the testes and ovaries to synthesize steroids. In Pongo pygmaeus (Bornean orangutan), this protein is Lutropin subunit beta (LHB).